Consider the following 1088-residue polypeptide: RNA-directed RNA polymerase (1088 aa).

Residues 501–687 enclose the RdRp catalytic domain; it reads LSYGDVTRFL…AKRYIAGGKI (187 aa).

Belongs to the reoviridae RNA-directed RNA polymerase family. In terms of assembly, interacts with VP3 (Potential). Interacts with VP2; this interaction activates VP1. Interacts with NSP5; this interaction is probably necessary for the formation of functional virus factories. Interacts with NSP2; this interaction is weak. Mg(2+) is required as a cofactor.

The protein resides in the virion. The enzyme catalyses RNA(n) + a ribonucleoside 5'-triphosphate = RNA(n+1) + diphosphate. RNA-directed RNA polymerase that is involved in both transcription and genome replication. Together with VP3 capping enzyme, forms an enzyme complex positioned near the channels situated at each of the five-fold vertices of the core. Following infection, the outermost layer of the virus is lost, leaving a double-layered particle (DLP) made up of the core and VP6 shell. VP1 then catalyzes the transcription of fully conservative plus-strand genomic RNAs that are extruded through the DLP's channels into the cytoplasm where they function as mRNAs for translation of viral proteins. One copy of each of the viral (+)RNAs is also recruited during core assembly, together with newly synthesized polymerase complexes and VP2. The polymerase of these novo-formed particles catalyzes the synthesis of complementary minus-strands leading to dsRNA formation. To do so, the polymerase specifically recognizes and binds 4 bases 5'-UGUG-3' in the conserved 3'-sequence of plus-strand RNA templates. VP2 presumably activates the autoinhibited VP1-RNA complex to coordinate packaging and genome replication. Once dsRNA synthesis is complete, the polymerase switches to the transcriptional mode, thus providing secondary transcription. The sequence is that of RNA-directed RNA polymerase from Rotavirus A (strain RVA/SA11-Patton/G3P[X]) (RV-A).